A 256-amino-acid polypeptide reads, in one-letter code: Type II phosphatidylinositol 4,5-bisphosphate 4-phosphatase (256 aa).

Residues 1–10 (MAADGIDERS) are compositionally biased toward basic and acidic residues. Residues 1–25 (MAADGIDERSPLISPSSGNVTPTAP) form a disordered region. Polar residues predominate over residues 13 to 22 (ISPSSGNVTP). C106 is an active-site residue. Residues 106-112 (CKDISRR) carry the CX5R motif motif. Transmembrane regions (helical) follow at residues 191 to 211 (CCTYITMGMICIFIGVGLTVG) and 226 to 246 (WAVAYLVGLVCLVRACYWGAI).

It localises to the late endosome membrane. The protein resides in the lysosome membrane. The catalysed reaction is a 1,2-diacyl-sn-glycero-3-phospho-(1D-myo-inositol-4,5-bisphosphate) + H2O = a 1,2-diacyl-sn-glycero-3-phospho-(1D-myo-inositol-5-phosphate) + phosphate. Its function is as follows. Catalyzes the hydrolysis of phosphatidylinositol-4,5-bisphosphate (PtdIns-4,5-P2) to phosphatidylinositol-4-phosphate (PtdIns-4-P). The protein is Type II phosphatidylinositol 4,5-bisphosphate 4-phosphatase of Xenopus laevis (African clawed frog).